The primary structure comprises 61 residues: Odorranain-A6 (61 aa).

Residues 1-22 form the signal peptide; that stretch reads MFSMKKSLLLLFFLGTISLSLC. Residues 23-45 constitute a propeptide that is removed on maturation; it reads EQERDAEEEEGSENGAEDIKINR.

It belongs to the frog skin active peptide (FSAP) family. Brevinin subfamily. Expressed by the skin glands.

The protein localises to the secreted. This is Odorranain-A6 from Odorrana hainanensis (Odor frog).